The primary structure comprises 95 residues: Co-chaperonin GroES (95 aa).

It belongs to the GroES chaperonin family. Heptamer of 7 subunits arranged in a ring. Interacts with the chaperonin GroEL.

The protein resides in the cytoplasm. Its function is as follows. Together with the chaperonin GroEL, plays an essential role in assisting protein folding. The GroEL-GroES system forms a nano-cage that allows encapsulation of the non-native substrate proteins and provides a physical environment optimized to promote and accelerate protein folding. GroES binds to the apical surface of the GroEL ring, thereby capping the opening of the GroEL channel. The polypeptide is Co-chaperonin GroES (Staphylococcus haemolyticus (strain JCSC1435)).